A 247-amino-acid polypeptide reads, in one-letter code: 3(1)-hydroxy-L-isoleucine 4-dioxygenase (247 aa).

Residues H160, D162, and H213 each coordinate Fe cation.

It belongs to the iron/ascorbate-dependent oxidoreductase family. It depends on L-ascorbate as a cofactor. Fe(2+) serves as cofactor.

It carries out the reaction 3(1)-hydroxy-L-isoleucine + 2-oxoglutarate + O2 = (4S)-3(1),4-dihydroxy-L-isoleucine + succinate + CO2. Its function is as follows. Catalyzes the hydroxylation of L-4'-hydroxyisoleucine (4'-HIL) at the C-4 position to form L-4,4'-dihydroxyisoleucine (4,4'-DIHIL). Together with HilA, catalyzes the two step conversion of L-isoleucine into L-4,4'-dihydroxyisoleucine. In vitro, in the absence of HilA, can also catalyze the oxidation of L-methionine and the C-4-hydroxylation of L-leucine and L-isoleucine. This is 3(1)-hydroxy-L-isoleucine 4-dioxygenase from Pantoea ananatis (strain AJ13355).